Consider the following 804-residue polypeptide: Leucine--tRNA ligase (804 aa).

A 'HIGH' region motif is present at residues 40–51; the sequence is PYPSGQGLHVGH. A 'KMSKS' region motif is present at residues 576-580; it reads KMSKS. Residue Lys-579 participates in ATP binding.

This sequence belongs to the class-I aminoacyl-tRNA synthetase family.

It is found in the cytoplasm. The enzyme catalyses tRNA(Leu) + L-leucine + ATP = L-leucyl-tRNA(Leu) + AMP + diphosphate. The polypeptide is Leucine--tRNA ligase (Oceanobacillus iheyensis (strain DSM 14371 / CIP 107618 / JCM 11309 / KCTC 3954 / HTE831)).